The primary structure comprises 248 residues: Probable transcriptional regulatory protein HCH_04926 (248 aa).

It belongs to the TACO1 family.

The protein resides in the cytoplasm. The chain is Probable transcriptional regulatory protein HCH_04926 from Hahella chejuensis (strain KCTC 2396).